Reading from the N-terminus, the 374-residue chain is Heptahelical transmembrane protein 5 (374 aa).

The Cytoplasmic portion of the chain corresponds to 1-79 (MGDEAEIKEH…LSIFTIHNET (79 aa)). Residues 80–100 (LNVWTHLIGFFLFLALTIYTA) form a helical membrane-spanning segment. Over 101-191 (TKVPSVVDLH…LIFRPITRWP (91 aa)) the chain is Extracellular. Residues 192–212 (FYAFLGGAIFCLLASSTCHLL) traverse the membrane as a helical segment. Residues 213–228 (SCHSERVSYIMLRLDY) are Cytoplasmic-facing. The chain crosses the membrane as a helical span at residues 229 to 249 (AGIAALIATSFYPPVYYSFMC). Over 250 to 256 (DPFFCNL) the chain is Extracellular. The helical transmembrane segment at 257-277 (YLGFITILGIATVLVSLLPVF) threads the bilayer. Topologically, residues 278–288 (QSLEFRVVRAS) are cytoplasmic. The chain crosses the membrane as a helical span at residues 289–309 (LFFGMGFSGLAPILHKLIIFW). Residues 310 to 313 (DQPE) lie on the Extracellular side of the membrane. The helical transmembrane segment at 314–334 (ALHMTGYEILMGLLYGLGAVV) threads the bilayer. Residues 335–347 (YATRIPERWMPGK) lie on the Cytoplasmic side of the membrane. A helical transmembrane segment spans residues 348-368 (FDIAGHSHQLFHVLVVAGALT). At 369-374 (HYRAGL) the chain is on the extracellular side.

The protein belongs to the ADIPOR family. Expressed in roots, leaves, stems and flowers.

It is found in the membrane. Functionally, may play a role in abiotic stress response. This Arabidopsis thaliana (Mouse-ear cress) protein is Heptahelical transmembrane protein 5 (HHP5).